The primary structure comprises 149 residues: Ribosome maturation factor RimP (149 aa).

Belongs to the RimP family.

The protein resides in the cytoplasm. Functionally, required for maturation of 30S ribosomal subunits. This chain is Ribosome maturation factor RimP, found in Neisseria gonorrhoeae (strain NCCP11945).